The chain runs to 312 residues: Acetyl-coenzyme A carboxylase carboxyl transferase subunit alpha (312 aa).

Residues 36–286 (RLDKEVKSIY…KEYFLDALRT (251 aa)) form the CoA carboxyltransferase C-terminal domain.

The protein belongs to the AccA family. As to quaternary structure, acetyl-CoA carboxylase is a heterohexamer composed of biotin carboxyl carrier protein (AccB), biotin carboxylase (AccC) and two subunits each of ACCase subunit alpha (AccA) and ACCase subunit beta (AccD).

The protein resides in the cytoplasm. It carries out the reaction N(6)-carboxybiotinyl-L-lysyl-[protein] + acetyl-CoA = N(6)-biotinyl-L-lysyl-[protein] + malonyl-CoA. It functions in the pathway lipid metabolism; malonyl-CoA biosynthesis; malonyl-CoA from acetyl-CoA: step 1/1. Functionally, component of the acetyl coenzyme A carboxylase (ACC) complex. First, biotin carboxylase catalyzes the carboxylation of biotin on its carrier protein (BCCP) and then the CO(2) group is transferred by the carboxyltransferase to acetyl-CoA to form malonyl-CoA. The sequence is that of Acetyl-coenzyme A carboxylase carboxyl transferase subunit alpha from Helicobacter pylori (strain Shi470).